The chain runs to 353 residues: UDP-xylose transporter 2 (353 aa).

A run of 10 helical transmembrane segments spans residues 7–27, 31–51, 75–95, 100–120, 132–152, 154–174, 194–214, 224–244, 250–270, and 280–300; these read FQLG…SIVI, ALIS…HLLV, VLGF…SLGF, FYQM…TIFF, LVIL…LNML, SVLS…TNTI, AITL…QNVF, FFIV…FLVI, VTYQ…GYLL, and ILGI…CTLE. Residues 308 to 353 are disordered; it reads TSTQLPQMDENEKDPLVSAENGSGLISDNGVQKQDPVWNSNKDFQA. The segment covering 327 to 353 has biased composition (polar residues); that stretch reads ENGSGLISDNGVQKQDPVWNSNKDFQA. Position 334 is a phosphoserine (S334).

This sequence belongs to the TPT transporter family. TPT (TC 2.A.7.9) subfamily. Ubiquitous.

It is found in the golgi apparatus membrane. In terms of biological role, nucleotide-sugar transporter that transports UDP-xylose and UMP in a strict counter-exchange mode. The sequence is that of UDP-xylose transporter 2 from Arabidopsis thaliana (Mouse-ear cress).